We begin with the raw amino-acid sequence, 249 residues long: Probable phosphatase VVA0289 (249 aa).

His-8, His-10, His-16, His-41, Glu-74, His-102, His-132, Asp-194, and His-196 together coordinate Zn(2+).

It belongs to the PHP family. Requires Zn(2+) as cofactor.

This chain is Probable phosphatase VVA0289, found in Vibrio vulnificus (strain YJ016).